The following is a 278-amino-acid chain: Phosphatidylglycerol--prolipoprotein diacylglyceryl transferase (278 aa).

Transmembrane regions (helical) follow at residues 21 to 41 (WYGI…QASV), 54 to 74 (IIFW…VIFQ), and 88 to 108 (IWHG…TGII). Residue arginine 136 participates in a 1,2-diacyl-sn-glycero-3-phospho-(1'-sn-glycerol) binding. 2 consecutive transmembrane segments (helical) span residues 176–196 (QPTF…LILL) and 234–254 (IRVA…IMII).

It belongs to the Lgt family.

It localises to the cell membrane. The enzyme catalyses L-cysteinyl-[prolipoprotein] + a 1,2-diacyl-sn-glycero-3-phospho-(1'-sn-glycerol) = an S-1,2-diacyl-sn-glyceryl-L-cysteinyl-[prolipoprotein] + sn-glycerol 1-phosphate + H(+). It participates in protein modification; lipoprotein biosynthesis (diacylglyceryl transfer). Functionally, catalyzes the transfer of the diacylglyceryl group from phosphatidylglycerol to the sulfhydryl group of the N-terminal cysteine of a prolipoprotein, the first step in the formation of mature lipoproteins. The chain is Phosphatidylglycerol--prolipoprotein diacylglyceryl transferase from Staphylococcus xylosus.